The sequence spans 286 residues: MTKADTIFKENITKIMEEGVWSEQARPKYKDGTTANSKYITGSFAEYDLSKGEFPITTLRPIAIKSAIKEVFWIYQDQTNSLDVLEDKYNVHYWNDWEVEGVPANNGDKRSIGQRYGAVVKKHDIINRLLAQLEANPWNRRNVISLWDYEAFEETAGLQPCAFQTMFDVRRVGEDVYLDATLTQRSNDMLVAHHINAMQYVALQMMIAKHFGWKIGKFFYFINNLHIYDNQFEQAEELLKRQPSDCQPRLVLNVPDETNFFDIKPEDFELVDYDPVKPQLKFDLAI.

140 to 141 (RR) serves as a coordination point for dUMP. Cys-161 (nucleophile) is an active-site residue. DUMP-binding positions include 185 to 188 (RSND), Asn-196, and 226 to 228 (HIY). A (6R)-5,10-methylene-5,6,7,8-tetrahydrofolate-binding site is contributed by Asp-188. Ala-285 contributes to the (6R)-5,10-methylene-5,6,7,8-tetrahydrofolate binding site.

This sequence belongs to the thymidylate synthase family. Bacterial-type ThyA subfamily. As to quaternary structure, homodimer.

The protein resides in the cytoplasm. It catalyses the reaction dUMP + (6R)-5,10-methylene-5,6,7,8-tetrahydrofolate = 7,8-dihydrofolate + dTMP. Its pathway is pyrimidine metabolism; dTTP biosynthesis. Functionally, catalyzes the reductive methylation of 2'-deoxyuridine-5'-monophosphate (dUMP) to 2'-deoxythymidine-5'-monophosphate (dTMP) while utilizing 5,10-methylenetetrahydrofolate (mTHF) as the methyl donor and reductant in the reaction, yielding dihydrofolate (DHF) as a by-product. This enzymatic reaction provides an intracellular de novo source of dTMP, an essential precursor for DNA biosynthesis. The chain is Thymidylate synthase from Streptococcus thermophilus (strain CNRZ 1066).